A 368-amino-acid chain; its full sequence is Ribosomal RNA large subunit methyltransferase M (368 aa).

S-adenosyl-L-methionine contacts are provided by residues Ser-199, Ala-232–Gly-235, Asp-251, Asp-271, and Asp-287. The active-site Proton acceptor is the Lys-316.

The protein belongs to the class I-like SAM-binding methyltransferase superfamily. RNA methyltransferase RlmE family. RlmM subfamily. As to quaternary structure, monomer.

The protein resides in the cytoplasm. It catalyses the reaction cytidine(2498) in 23S rRNA + S-adenosyl-L-methionine = 2'-O-methylcytidine(2498) in 23S rRNA + S-adenosyl-L-homocysteine + H(+). Catalyzes the 2'-O-methylation at nucleotide C2498 in 23S rRNA. This Aromatoleum aromaticum (strain DSM 19018 / LMG 30748 / EbN1) (Azoarcus sp. (strain EbN1)) protein is Ribosomal RNA large subunit methyltransferase M.